The primary structure comprises 504 residues: MEEFQGYLELDIFRQHDFLYPLIFREYSYALGHGHGLNRYMLLENIGYDNKSSLLIVKRLITTMYQQNYLIISANDSKQNPFFGYNKNLHSKILSEGFAIIVEIPFYLRLISSLEGAEIVRFYNLRSIHSIFPFLEEKFPHLNYSADILIPYPAHLEILVQTLRYRVKDASYLHLLRFFLHEYSNCNSLIITNKSISIFSKSNPRFFLFLYNSYICEYESIFLFLRNQSSHLRLTSSGVLFERLCLYRKIEHFAEVFANDFPVIPCFLKDPFMHYVRYQGKSILASKDTPLLMNKWKSYLVNLWQCHFDVWSHAASIRINQLSKHSLDFLSYFSSVRRNPAVVRNQMLENSFLLNNAPNKLDTIVPIIPLIGSLAKAKFCNAVGHPISKLTRADLSDFEIINRFLHICRNLSHYYSGSSKKKNMYRIKYILRLSCVKTLARKHKSTARAFLKRVDSEFFQEFFTEEGGFISLIFPRASFALRRLYSGRVWYLDIIFINGLSNHE.

The protein belongs to the intron maturase 2 family. MatK subfamily.

It localises to the plastid. The protein resides in the chloroplast. Usually encoded in the trnK tRNA gene intron. Probably assists in splicing its own and other chloroplast group II introns. This Quercus petraea (Durmast oak) protein is Maturase K.